The following is a 610-amino-acid chain: Solute carrier family 23 member 3 (610 aa).

Polar residues predominate over residues 1 to 16; that stretch reads MSRSPLNPSQLRSVGS. The segment at 1–32 is disordered; it reads MSRSPLNPSQLRSVGSQDALAPLPPPAPQNPS. At 1-49 the chain is on the cytoplasmic side; the sequence is MSRSPLNPSQLRSVGSQDALAPLPPPAPQNPSTHSWDPLCGSLPWGLSC. Residues 50–70 traverse the membrane as a helical segment; the sequence is LLALQHVLVMASLLCVSHLLL. The Extracellular portion of the chain corresponds to 71–85; sequence LCSLSPGGLSYSPSQ. A helical membrane pass occupies residues 86-106; sequence LLASSFFSCGMSTILQTWMGS. Residues 107–164 lie on the Cytoplasmic side of the membrane; that stretch reads RLPLVQAPSLEFLIPALVLTSQKLPRAIQTPGNSSLMLHLCRGPSCHGLGHWNTSLQE. The chain crosses the membrane as a helical span at residues 165-185; that stretch reads VSGAVVVSGLLQGMMGLLGSP. At 186 to 187 the chain is on the extracellular side; it reads GH. The chain crosses the membrane as a helical span at residues 188 to 208; it reads VFPHCGPLVLAPSLVVAGLSA. At 209–211 the chain is on the cytoplasmic side; it reads HRE. Residues 212 to 232 form a helical membrane-spanning segment; sequence VAQFCFTHWGLALLVILLMVV. Topologically, residues 233 to 266 are extracellular; the sequence is CSQHLGSCQFHVCPWRRASTSSTHTPLPVFRLLS. Residues 267–287 traverse the membrane as a helical segment; sequence VLIPVACVWIVSAFVGFSVIP. At 288-316 the chain is on the cytoplasmic side; sequence QELSAPTKAPWIWLPHPGEWNWPLLTPRA. The chain crosses the membrane as a helical span at residues 317–337; the sequence is LAAGISMALAASTSSLGCYAL. Residues 338–355 lie on the Extracellular side of the membrane; that stretch reads CGRLLHLPPPPPHACSRG. A helical membrane pass occupies residues 356–376; sequence LSLEGLGSVLAGLLGSPMGTA. The Cytoplasmic portion of the chain corresponds to 377–394; that stretch reads SSFPNVGKVGLIQAGSQQ. The helical transmembrane segment at 395 to 414 threads the bilayer; that stretch reads VAHLVGLLCVGLGLSPRLAQ. Over 415-423 the chain is Extracellular; sequence LLTTIPLPV. Residues 424 to 446 traverse the membrane as a helical segment; sequence VGGVLGVTQAVVLSAGFSSFYLA. At 447–452 the chain is on the cytoplasmic side; that stretch reads DIDSGR. A helical membrane pass occupies residues 453 to 472; it reads NIFIVGFSIFMALLLPRWFR. The Extracellular segment spans residues 473–486; it reads EAPVLFSTGWSPLD. Residues 487 to 507 form a helical membrane-spanning segment; sequence VLLHSLLTQPIFLAGLSGFLL. At 508-610 the chain is on the cytoplasmic side; it reads ENTIPGTQLE…SSREGFRSQK (103 aa). Residues 571–610 are disordered; the sequence is PEDPGDEEGGSSEPEEMADLLPGSGEPCPESSREGFRSQK. Over residues 573 to 588 the composition is skewed to acidic residues; sequence DPGDEEGGSSEPEEMA. Residues 601 to 610 are compositionally biased toward basic and acidic residues; the sequence is SSREGFRSQK.

Belongs to the nucleobase:cation symporter-2 (NCS2) (TC 2.A.40) family.

The protein localises to the membrane. It catalyses the reaction hypoxanthine(out) + Na(+)(out) = hypoxanthine(in) + Na(+)(in). Acts as a sodium-dependent hypoxanthine transporter. May show xanthine-hypoxanthine exchange activity. This Homo sapiens (Human) protein is Solute carrier family 23 member 3 (SLC23A3).